The chain runs to 318 residues: NADH-ubiquinone oxidoreductase chain 1 (318 aa).

Helical transmembrane passes span 2-22 (FLTN…FLTL), 36-56 (GPNI…IKLF), 69-89 (LLFT…WIPL), 100-120 (LGML…LWSG), 130-152 (IGAL…ILLH), 171-191 (HIWL…STLA), 217-237 (AGPF…MNAL), 254-273 (LYST…FLWI), and 294-314 (LPLT…LTSI).

Belongs to the complex I subunit 1 family.

Its subcellular location is the mitochondrion inner membrane. It carries out the reaction a ubiquinone + NADH + 5 H(+)(in) = a ubiquinol + NAD(+) + 4 H(+)(out). Functionally, core subunit of the mitochondrial membrane respiratory chain NADH dehydrogenase (Complex I) that is believed to belong to the minimal assembly required for catalysis. Complex I functions in the transfer of electrons from NADH to the respiratory chain. The immediate electron acceptor for the enzyme is believed to be ubiquinone. The protein is NADH-ubiquinone oxidoreductase chain 1 (MT-ND1) of Cyclopes didactylus (Silky anteater).